The following is a 326-amino-acid chain: dTDP-4-dehydro-6-deoxy-D-allose reductase (326 aa).

NAD(+)-binding positions include 15–21 (GALGFIG) and 129–132 (MSSS). The active-site Proton donor/acceptor is the Tyr160. Residues Lys164 and 187 to 190 (PGNV) contribute to the NAD(+) site.

The protein belongs to the NAD(P)-dependent epimerase/dehydratase family.

The enzyme catalyses dTDP-6-deoxy-alpha-D-allose + NAD(+) = dTDP-4-dehydro-6-deoxy-alpha-D-allose + NADH + H(+). The catalysed reaction is dTDP-6-deoxy-alpha-D-allose + NADP(+) = dTDP-4-dehydro-6-deoxy-alpha-D-allose + NADPH + H(+). In terms of biological role, catalyzes the stereospecific reduction of the C-4 keto group of dTDP-4-dehydro-6-deoxy-D-allose, leading to dTDP-6-deoxy-D-allose, an intermediate in the biosynthesis of the mycinose moiety of dihydrochalcomycin (GERI-155) antibiotic. Cannot directly reduce dTDP-4-dehydro-6-deoxyglucose, and thus acts after the epimerization step catalyzed by GerF. The chain is dTDP-4-dehydro-6-deoxy-D-allose reductase (gerKI) from Streptomyces sp.